The primary structure comprises 119 residues: Platelet basic protein (119 aa).

An N-terminal signal peptide occupies residues 1 to 33 (MSLRLGAISSCTTSSPFPVLQVLLPLSLLLTTL). Positions 34-39 (VPATMG) are excised as a propeptide. Disulfide bonds link Cys-54–Cys-80 and Cys-56–Cys-96.

The protein resides in the secreted. In terms of biological role, chemoattractant factor for neutrophils. The chain is Platelet basic protein (PPBP) from Sus scrofa (Pig).